A 291-amino-acid chain; its full sequence is Zinc transporter ZupT (291 aa).

Transmembrane regions (helical) follow at residues 8–28, 39–59, 74–94, 147–167, 174–194, 209–229, 233–253, and 271–291; these read IFIA…GSII, VLSL…FMEI, HWAE…SLLI, GIFT…ATFI, TLGI…GLAV, FIYS…GALI, FIGD…MVFI, and SLYG…LLGQ. Asn-158 and Glu-161 together coordinate Fe(2+). Zn(2+) contacts are provided by Glu-161 and His-186. Fe(2+)-binding residues include Asn-187, Glu-190, and Glu-219. Glu-190 contacts Zn(2+).

The protein belongs to the ZIP transporter (TC 2.A.5) family. ZupT subfamily.

The protein localises to the cell inner membrane. It catalyses the reaction Zn(2+)(in) = Zn(2+)(out). Functionally, mediates zinc uptake. May also transport other divalent cations. This chain is Zinc transporter ZupT, found in Campylobacter jejuni subsp. jejuni serotype O:2 (strain ATCC 700819 / NCTC 11168).